The chain runs to 102 residues: Protein CASC2, isoform 3 (102 aa).

Expressed in normal and neoplastic endometrial tissues.

Its function is as follows. May act as a potential tumor suppressor. This Homo sapiens (Human) protein is Protein CASC2, isoform 3 (CASC2).